The chain runs to 1051 residues: SWI/SNF-related matrix-associated actin-dependent regulator of chromatin subfamily A member 5 (1051 aa).

Residues 1 to 15 (MSSAVEPPPPPPPES) show a composition bias toward pro residues. Positions 1 to 81 (MSSAVEPPPP…IQEPDPTYEE (81 aa)) are disordered. The residue at position 2 (Ser-2) is an N-acetylserine. Positions 24 to 38 (GAGGSSSGNKGGPEG) are enriched in gly residues. A compositionally biased stretch (low complexity) spans 39 to 53 (GAAPAAPCAAGSGPA). Thr-55 bears the Phosphothreonine mark. At Ser-65 the chain carries Phosphoserine. Over residues 68-81 (KQKEIQEPDPTYEE) the composition is skewed to basic and acidic residues. A Glycyl lysine isopeptide (Lys-Gly) (interchain with G-Cter in SUMO2) cross-link involves residue Lys-82. Residue Thr-112 is modified to Phosphothreonine. 3 positions are modified to phosphoserine: Ser-115, Ser-136, and Ser-170. In terms of domain architecture, Helicase ATP-binding spans 191–356 (ISLYENGING…WSLLNFLLPD (166 aa)). 204–211 (DEMGLGKT) serves as a coordination point for ATP. The DEAH box signature appears at 307–310 (DEAH). Lys-439 carries the N6-acetyllysine modification. Residues 486–637 (VLDKLLPKLK…SIVIQQGRLV (152 aa)) enclose the Helicase C-terminal domain. Residues Lys-643, Lys-646, Lys-693, Lys-721, and Lys-734 each participate in a glycyl lysine isopeptide (Lys-Gly) (interchain with G-Cter in SUMO2) cross-link. Ser-754 bears the Phosphoserine mark. SANT domains are found at residues 839–891 (QGFT…ERCN) and 942–1006 (KGKN…LITL). Lys-965 participates in a covalent cross-link: Glycyl lysine isopeptide (Lys-Gly) (interchain with G-Cter in SUMO2). The tract at residues 1014 to 1051 (LEEKEKAEKKKRGPKPSTQKRKMDGAPDGRGRKKKLKL) is disordered. Residues 1022 to 1033 (KKKRGPKPSTQK) show a composition bias toward basic residues. The span at 1034–1043 (RKMDGAPDGR) shows a compositional bias: basic and acidic residues.

Belongs to the SNF2/RAD54 helicase family. ISWI subfamily. Component of the ACF-5 ISWI chromatin-remodeling complex (also called the ACF/WCRF complex) at least composed of SMARCA5/SNF2H and BAZ1A/ACF1, which regulates the spacing of histone octamers on the DNA template to facilitate access to DNA. Within the complex interacts with BAZ1A/ACF1; the interaction is direct and is required to slide nucleosomes from end to center positions on a DNA template in an ATP-dependent manner. Component of the CHRAC ISWI chromatin-remodeling complex at least composed of SMARCA5/SNF2H, BAZ1A/ACF1, CHRAC1 and POLE3; the complex preferentially binds DNA through the CHRAC1-POLE3 heterodimer and possesses ATP-dependent nucleosome-remodeling activity. Within the complex interacts with BAZ1A/ACF1; the interaction is direct and promotes the interaction with the POLE3-CHRAC1 heterodimer. Within the complex interacts with the POLE3-CHRAC1 heterodimer; the interaction is direct and enhances nucleosome sliding activity by the SMARCA5/SNF2H and BAZ1A/ACF1 interaction. Neither POLE3 nor CHRAC1 enhances nucleosome sliding activity of the ACF-5 ISWI chromatin remodeling complex. Component of the WICH-5 ISWI chromatin-remodeling complex (also called the WICH complex) at least composed of SMARCA5/SNF2H and BAZ1B/WSTF, which regulates the spacing of histone octamers on the DNA template to facilitate access to DNA. Within the complex interacts with BAZ1B/WSTF. Component of the NoRC-5 ISWI chromatin-remodeling complex (also called the NoRC chromatin-remodeling complex) at least composed of SMARCA5/SNF2H and BAZ2A/TIP5; the complex suppresses rDNA transcription by a combination of nucleosome remodeling, histone deacetylation, and DNA methylation. Within the complex interacts with BAZ2A/TIP5. Within the complex interacts with HDAC1. Component of the BRF-5 ISWI chromatin-remodeling complex at least composed of SMARCA5/SNF2H and BAZ2B. Within the complex interacts with BAZ2B. Component of the NURF-5 ISWI chromatin-remodeling complex at least composed of SMARCA5/SNF2H and BPTF. Within the complex interacts with BPFT. Component of the CERF-5 ISWI chromatin-remodeling complex at least composed of SMARCA5/SNF2H and CECR2. LUZP1 is detected as part of the CERF-5 complex in embryonic stem cells where it is involved in complex stabilization but is not detected in the complex in the testis. Component of the RSF-5 ISWI chromatin-remodeling complex (also called the RSF complex) at least composed of SMARCA5/SNF2H and RSF1. Within the complex interacts with RSF1. Interacts with the cohesin complex component RAD21; the interaction is direct. Interacts with the NuRD complex components HDAC2, RBBP4 and CHD4; the interactions are direct. Interacts with PCNA. Component of the B-WICH complex, at least composed of SMARCA5/SNF2H, BAZ1B/WSTF, SF3B1, DEK, MYO1C, ERCC6, MYBBP1A and DDX21 which positively regulates RNA polymerase III transcription. Interacts with MYO1C. Interacts with BEND3. Interacts with SIRT6; promoting recruitment to DNA damage sites. Ubiquitously expressed.

It is found in the nucleus. The protein resides in the chromosome. The catalysed reaction is ATP + H2O = ADP + phosphate + H(+). ATPase that possesses intrinsic ATP-dependent nucleosome-remodeling activity. Catalytic subunit of ISWI chromatin-remodeling complexes, which form ordered nucleosome arrays on chromatin and facilitate access to DNA during DNA-templated processes such as DNA replication, transcription, and repair; this may require intact histone H4 tails. Within the ISWI chromatin-remodeling complexes, slides edge- and center-positioned histone octamers away from their original location on the DNA template. Catalytic activity and histone octamer sliding propensity is regulated and determined by components of the ISWI chromatin-remodeling complexes. The BAZ1A/ACF1-, BAZ1B/WSTF-, BAZ2A/TIP5- and BAZ2B-containing ISWI chromatin-remodeling complexes regulate the spacing of nucleosomes along the chromatin and have the ability to slide mononucleosomes to the center of a DNA template in an ATP-dependent manner. The CECR2- and RSF1-containing ISWI chromatin-remodeling complexes do not have the ability to slide mononucleosomes to the center of a DNA template. Binds to core histones together with RSF1, and is required for the assembly of regular nucleosome arrays by the RSF-5 ISWI chromatin-remodeling complex. Involved in DNA replication and together with BAZ1A/ACF1 is required for replication of pericentric heterochromatin in S-phase. Probably plays a role in repression of RNA polymerase I dependent transcription of the rDNA locus, through the recruitment of the SIN3/HDAC1 corepressor complex to the rDNA promoter. The WICH-5 ISWI chromatin-remodeling complex regulates the transcription of various genes, has a role in RNA polymerase I and RNA polymerase III transcription, mediates the histone H2AX phosphorylation at 'Tyr-142', and is involved in the maintenance of chromatin structures during DNA replication processes. Essential component of the NoRC-5 ISWI chromatin-remodeling complex, a complex that mediates silencing of a fraction of rDNA by recruiting histone-modifying enzymes and DNA methyltransferases, leading to heterochromatin formation and transcriptional silencing. Required for embryonic development and differentiation, and the proliferation of early blastocyst-derived stem cells. The sequence is that of SWI/SNF-related matrix-associated actin-dependent regulator of chromatin subfamily A member 5 (Smarca5) from Mus musculus (Mouse).